Reading from the N-terminus, the 451-residue chain is Tubulin alpha-3 chain (451 aa).

Q11 lines the GTP pocket. The residue at position 40 (K40) is an N6-acetyllysine. 7 residues coordinate GTP: E71, S140, G144, T145, T179, N206, and N228. E71 is a Mg(2+) binding site. Residue E254 is part of the active site.

This sequence belongs to the tubulin family. Dimer of alpha and beta chains. A typical microtubule is a hollow water-filled tube with an outer diameter of 25 nm and an inner diameter of 15 nM. Alpha-beta heterodimers associate head-to-tail to form protofilaments running lengthwise along the microtubule wall with the beta-tubulin subunit facing the microtubule plus end conferring a structural polarity. Microtubules usually have 13 protofilaments but different protofilament numbers can be found in some organisms and specialized cells. The cofactor is Mg(2+). Post-translationally, undergoes a tyrosination/detyrosination cycle, the cyclic removal and re-addition of a C-terminal tyrosine residue by the enzymes tubulin tyrosine carboxypeptidase (TTCP) and tubulin tyrosine ligase (TTL), respectively. Acetylation of alpha chains at Lys-40 stabilizes microtubules and affects affinity and processivity of microtubule motors. This modification has a role in multiple cellular functions, ranging from cell motility, cell cycle progression or cell differentiation to intracellular trafficking and signaling.

The protein resides in the cytoplasm. Its subcellular location is the cytoskeleton. The enzyme catalyses GTP + H2O = GDP + phosphate + H(+). In terms of biological role, tubulin is the major constituent of microtubules, a cylinder consisting of laterally associated linear protofilaments composed of alpha- and beta-tubulin heterodimers. Microtubules grow by the addition of GTP-tubulin dimers to the microtubule end, where a stabilizing cap forms. Below the cap, tubulin dimers are in GDP-bound state, owing to GTPase activity of alpha-tubulin. This is Tubulin alpha-3 chain from Homarus americanus (American lobster).